Reading from the N-terminus, the 191-residue chain is Crossover junction endodeoxyribonuclease RuvC (191 aa).

Residues aspartate 7, glutamate 67, and aspartate 141 contribute to the active site. Residues aspartate 7, glutamate 67, and aspartate 141 each contribute to the Mg(2+) site.

Belongs to the RuvC family. As to quaternary structure, homodimer which binds Holliday junction (HJ) DNA. The HJ becomes 2-fold symmetrical on binding to RuvC with unstacked arms; it has a different conformation from HJ DNA in complex with RuvA. In the full resolvosome a probable DNA-RuvA(4)-RuvB(12)-RuvC(2) complex forms which resolves the HJ. Requires Mg(2+) as cofactor.

It localises to the cytoplasm. It catalyses the reaction Endonucleolytic cleavage at a junction such as a reciprocal single-stranded crossover between two homologous DNA duplexes (Holliday junction).. The RuvA-RuvB-RuvC complex processes Holliday junction (HJ) DNA during genetic recombination and DNA repair. Endonuclease that resolves HJ intermediates. Cleaves cruciform DNA by making single-stranded nicks across the HJ at symmetrical positions within the homologous arms, yielding a 5'-phosphate and a 3'-hydroxyl group; requires a central core of homology in the junction. The consensus cleavage sequence is 5'-(A/T)TT(C/G)-3'. Cleavage occurs on the 3'-side of the TT dinucleotide at the point of strand exchange. HJ branch migration catalyzed by RuvA-RuvB allows RuvC to scan DNA until it finds its consensus sequence, where it cleaves and resolves the cruciform DNA. This chain is Crossover junction endodeoxyribonuclease RuvC, found in Myxococcus xanthus (strain DK1622).